Consider the following 342-residue polypeptide: AA9 family lytic polysaccharide monooxygenase H (342 aa).

The N-terminal stretch at 1–19 is a signal peptide; sequence MSKASALLAGLTGAALVAA. The Cu(2+) site is built by histidine 20 and histidine 106. Intrachain disulfides connect cysteine 75-cysteine 195 and cysteine 117-cysteine 121. Histidine 181 and glutamine 190 together coordinate O2. Tyrosine 192 is a Cu(2+) binding site. A disordered region spans residues 263–308; that stretch reads ATVPGGGGANPTATTTAATSAAPSTTLRTTTTSAAQTTAPPSGDVQ. Residues 272 to 305 show a composition bias toward low complexity; the sequence is NPTATTTAATSAAPSTTLRTTTTSAAQTTAPPSG. In terms of domain architecture, CBM1 spans 306 to 342; it reads DVQTKYGQCGGNGWTGPTVCAPGSSCSVLNEWYSQCL.

Belongs to the polysaccharide monooxygenase AA9 family. Cu(2+) serves as cofactor.

It localises to the secreted. The enzyme catalyses [(1-&gt;4)-beta-D-glucosyl]n+m + reduced acceptor + O2 = 4-dehydro-beta-D-glucosyl-[(1-&gt;4)-beta-D-glucosyl]n-1 + [(1-&gt;4)-beta-D-glucosyl]m + acceptor + H2O.. With respect to regulation, the presence of lignin presents a significant source of antioxidants, which probably increase the activity by trapping liberated oxidized fragments. Functionally, lytic polysaccharide monooxygenase (LPMO) that depolymerizes crystalline and amorphous polysaccharides via the oxidation of scissile alpha- or beta-(1-4)-glycosidic bonds, yielding C1 or C4 oxidation products. Catalysis by LPMOs requires the reduction of the active-site copper from Cu(II) to Cu(I) by a reducing agent and H(2)O(2) or O(2) as a cosubstrate. Hydrolyzes weakly barley beta-glucan, carboxymethyl cellulose, lichenan, wheat arabinoxylan and birchwood xylan. Stimulates the hydrolysis of lignocellulosic substrates (such as hydrothermal pretreated wheat straw or steam-pretreated spruce), when combined with other cellulolytic enzymes. In Thermothelomyces thermophilus (strain ATCC 42464 / BCRC 31852 / DSM 1799) (Sporotrichum thermophile), this protein is AA9 family lytic polysaccharide monooxygenase H.